Here is a 98-residue protein sequence, read N- to C-terminus: NADH-ubiquinone oxidoreductase chain 4L (98 aa).

3 helical membrane-spanning segments follow: residues 1–21 (MTMV…GLLM), 29–49 (SLLC…VTIL), and 61–81 (IILL…LVMV).

Belongs to the complex I subunit 4L family. Core subunit of respiratory chain NADH dehydrogenase (Complex I) which is composed of 45 different subunits.

It localises to the mitochondrion inner membrane. The catalysed reaction is a ubiquinone + NADH + 5 H(+)(in) = a ubiquinol + NAD(+) + 4 H(+)(out). Functionally, core subunit of the mitochondrial membrane respiratory chain NADH dehydrogenase (Complex I) which catalyzes electron transfer from NADH through the respiratory chain, using ubiquinone as an electron acceptor. Part of the enzyme membrane arm which is embedded in the lipid bilayer and involved in proton translocation. The protein is NADH-ubiquinone oxidoreductase chain 4L (MT-ND4L) of Mirounga angustirostris (Northern elephant seal).